The chain runs to 818 residues: Dapper 1-A (818 aa).

Residues 1 to 10 (MKPIPSPEPP) are compositionally biased toward pro residues. Disordered regions lie at residues 1 to 30 (MKPI…WERH), 60 to 80 (VLSP…PRSD), 122 to 144 (IDSE…LSDG), 455 to 486 (NVTP…SALL), and 510 to 530 (ESSS…SSSQ). Residues 1 to 337 (MKPIPSPEPP…PVRTNKPRTS (337 aa)) form an interaction with tcf7l1-A region. Over residues 21–30 (DKGEAEWERH) the composition is skewed to basic and acidic residues. Residues 79–130 (SDEQKLLEENISLLKKQLNCLRKRDAGLLSQLHELDKQINDLKIDSEKTEET) are a coiled coil. Positions 122–132 (IDSEKTEETDS) are enriched in basic and acidic residues. Residues 455-485 (NVTPNAPANLPNASSSVCNGSPRESTQNSAL) show a composition bias toward polar residues. Positions 512 to 524 (SSFEERPPLDFKS) are enriched in basic and acidic residues. The PDZ-binding signature appears at 815–818 (MTTV).

This sequence belongs to the dapper family. In terms of assembly, interacts with dbf4 and tcf7l1-A. Interacts with dvl2/dsh via the C-terminus. Expressed in the animal and dorsal marginal regions at late blastula and early gastrula stages. Expressed predominantly in the anterior neural plate at neurulation. Expressed mainly in the ectodermal placodes, including the eye anlagen and the otic vesicle, at later stages of development.

The protein localises to the cytoplasm. It localises to the nucleus. In terms of biological role, involved in regulation of intracellular signaling pathways during development. Specifically thought to play a role in canonical and/or non-canonical Wnt signaling pathways through interaction with DSH (Dishevelled) family proteins. Binds to dvl2/dsh and impedes the degradation of beta-catenin (ctnnb1-A and possibly ctnnb1-B), thereby enhancing the transcriptional activation of target genes of the Wnt signaling pathway. Also promotes catenin delta/ctnnd1 stability which in turn promotes zbtb33/kaiso sequestration and thus is involved in the regulation of zbtb33/kaiso-mediated transcriptional repression. May also bind to and directly stimulate the transcriptional activity of tcf7l1-A. Required for eye development and neural patterning. This is Dapper 1-A (dact1-a) from Xenopus laevis (African clawed frog).